Consider the following 209-residue polypeptide: Putative amino acid efflux protein YcgF (209 aa).

The next 6 helical transmembrane spans lie at 1-21 (MNIF…VGPV), 39-59 (IFGL…YFGL), 62-82 (FLTA…VLTY), 110-130 (FASG…WLGI), 147-167 (LLIY…CMAI), and 184-204 (LTGI…YQGI).

Belongs to the Rht family.

Its subcellular location is the cell membrane. The sequence is that of Putative amino acid efflux protein YcgF (ycgF) from Bacillus subtilis (strain 168).